Consider the following 40-residue polypeptide: Large ribosomal subunit protein bL36A (40 aa).

This sequence belongs to the bacterial ribosomal protein bL36 family.

The protein is Large ribosomal subunit protein bL36A of Kineococcus radiotolerans (strain ATCC BAA-149 / DSM 14245 / SRS30216).